Here is a 169-residue protein sequence, read N- to C-terminus: 3-hydroxyanthranilate 3,4-dioxygenase (169 aa).

Arg44 is a binding site for O2. Positions 48, 54, and 92 each coordinate Fe cation. Glu54 contacts substrate. Substrate contacts are provided by Arg96 and Glu106. A divalent metal cation-binding residues include Cys121, Cys124, Cys158, and Cys160.

Belongs to the 3-HAO family. The cofactor is Fe(2+).

Its subcellular location is the cytoplasm. It carries out the reaction 3-hydroxyanthranilate + O2 = (2Z,4Z)-2-amino-3-carboxymuconate 6-semialdehyde. It functions in the pathway cofactor biosynthesis; NAD(+) biosynthesis; quinolinate from L-kynurenine: step 3/3. Catalyzes the oxidative ring opening of 3-hydroxyanthranilate to 2-amino-3-carboxymuconate semialdehyde, which spontaneously cyclizes to quinolinate. The sequence is that of 3-hydroxyanthranilate 3,4-dioxygenase from Meyerozyma guilliermondii (strain ATCC 6260 / CBS 566 / DSM 6381 / JCM 1539 / NBRC 10279 / NRRL Y-324) (Yeast).